Here is a 268-residue protein sequence, read N- to C-terminus: Undecaprenyl-diphosphatase (268 aa).

A run of 8 helical transmembrane segments spans residues 3-23 (FFNLLEAAFLGLIEGLTEFIP), 46-66 (FEVLIQLGAILAILSVYSAKL), 84-104 (LGVLVAFLPAAVIGALAHGFI), 107-127 (VLFETPMLVCIMLIVGGFILL), 144-164 (YPLPICLAIGFIQCLAMIPGV), 185-205 (AEFSFFLAMPTMAGAFAYDLF), 213-233 (FNDGALIVVGFIMAFISGVFV), and 246-266 (FALFGWWRLIVGSAGMAALII).

Belongs to the UppP family.

The protein localises to the cell inner membrane. The catalysed reaction is di-trans,octa-cis-undecaprenyl diphosphate + H2O = di-trans,octa-cis-undecaprenyl phosphate + phosphate + H(+). Catalyzes the dephosphorylation of undecaprenyl diphosphate (UPP). Confers resistance to bacitracin. The chain is Undecaprenyl-diphosphatase from Brucella abortus (strain S19).